Reading from the N-terminus, the 1223-residue chain is Kinesin-like protein costa (1223 aa).

One can recognise a Kinesin motor domain in the interval 4 to 394 (PIQVAVRICP…LQFAFKVQCV (391 aa)). The interval 13-90 (PYTEPSENRK…LPTDSNGNEN (78 aa)) is disordered. Basic and acidic residues predominate over residues 39 to 62 (AKAESFSDSEDNKNDASNRQRPEE). Residue 178–185 (GQRGQGKT) participates in ATP binding. Disordered stretches follow at residues 494-528 (RSQKQLVPIQEAEEPEESVSEPPNSDNDTDNESQR), 560-604 (KHPK…SIQP), and 625-646 (TAQPPPSVLDPESSIDPLESSA). Residues 569–593 (QERDKESKLDAPPEKDKEKIEERKT) show a composition bias toward basic and acidic residues. 3 coiled-coil regions span residues 658–743 (AAAN…QGRE), 773–825 (ESGQ…GASG), and 982–1015 (NKVIDLRDSSRKLELQLVQLERERDAWEWKERVL). A disordered region spans residues 774–799 (SGQKLKKLQQSMAESRKQQEELEKKI). A compositionally biased stretch (basic and acidic residues) spans 787–799 (ESRKQQEELEKKI). Low complexity predominate over residues 1162–1178 (TTTATATTTTTTTTTTT). Residues 1162–1188 (TTTATATTTTTTTTTTTGGKGKERGLP) form a disordered region.

The protein belongs to the TRAFAC class myosin-kinesin ATPase superfamily. Kinesin family. KIF27 subfamily. As to quaternary structure, homodimer (Potential). Binds microtubules. Interacts with ci, smo, sgg, CkIalpha and protein kinase A catalytic subunit.

It is found in the cytoplasm. It localises to the cytoskeleton. Functionally, regulates cubitus interruptus (ci) processing by recruiting multiple kinases to promote its efficient phosphorylation. Scaffolds multiple kinases and ci into proximity to promote its hyperphosphorylation, which then targets it for SCFSlimb/proteasome-mediated processing to generate its repressor form. Hh signaling inhibits ci phosphorylation by interfering with the cos-ci-kinases complex formation. The chain is Kinesin-like protein costa (cos) from Drosophila pseudoobscura pseudoobscura (Fruit fly).